The sequence spans 181 residues: NADH-quinone oxidoreductase subunit 2 (181 aa).

Cys-83, Ser-87, Cys-88, Cys-124, and Cys-128 together coordinate [2Fe-2S] cluster. A disulfide bond links Cys-144 and Cys-172.

Belongs to the complex I 24 kDa subunit family. NDH-1 is composed of 15 different subunits, Nqo1 to Nqo15. The complex has a L-shaped structure, with the hydrophobic arm (subunits Nqo7, Nqo8 and Nqo10 to Nqo14) embedded in the membrane and the hydrophilic peripheral arm (subunits Nqo1 to Nqo6, Nqo9 and Nqo15) protruding into the bacterial cytoplasm. The hydrophilic domain contains all the redox centers. [2Fe-2S] cluster is required as a cofactor.

Its subcellular location is the cell membrane. It catalyses the reaction a quinone + NADH + 5 H(+)(in) = a quinol + NAD(+) + 4 H(+)(out). NDH-1 shuttles electrons from NADH, via FMN and iron-sulfur (Fe-S) centers, to quinones in the respiratory chain. The immediate electron acceptor for the enzyme in this species is menaquinone. Couples the redox reaction to proton translocation (for every two electrons transferred, four hydrogen ions are translocated across the cytoplasmic membrane), and thus conserves the redox energy in a proton gradient required for the synthesis of ATP. This chain is NADH-quinone oxidoreductase subunit 2 (nqo2), found in Thermus thermophilus (strain ATCC 27634 / DSM 579 / HB8).